A 392-amino-acid chain; its full sequence is Probable glycerol-3-phosphate dehydrogenase 2 (392 aa).

Residues 42–47 (GSGNWG), phenylalanine 130, lysine 153, and alanine 196 contribute to the NAD(+) site. Substrate is bound at residue lysine 153. The active-site Proton acceptor is lysine 248. 2 residues coordinate NAD(+): arginine 312 and glutamine 341. A substrate-binding site is contributed by 312-313 (RN).

It belongs to the NAD-dependent glycerol-3-phosphate dehydrogenase family. In terms of assembly, homodimer.

The protein localises to the cytoplasm. It carries out the reaction sn-glycerol 3-phosphate + NAD(+) = dihydroxyacetone phosphate + NADH + H(+). In Caenorhabditis elegans, this protein is Probable glycerol-3-phosphate dehydrogenase 2 (gpdh-2).